The primary structure comprises 559 residues: Formate--tetrahydrofolate ligase (559 aa).

An ATP-binding site is contributed by 68–75 (TPAGEGKT).

The protein belongs to the formate--tetrahydrofolate ligase family.

The enzyme catalyses (6S)-5,6,7,8-tetrahydrofolate + formate + ATP = (6R)-10-formyltetrahydrofolate + ADP + phosphate. Its pathway is one-carbon metabolism; tetrahydrofolate interconversion. This Rhizobium etli (strain CIAT 652) protein is Formate--tetrahydrofolate ligase.